The following is a 43-amino-acid chain: Potassium channel toxin gamma-KTx 4.13 (43 aa).

Intrachain disulfides connect C5–C23, C11–C34, C20–C39, and C24–C41.

Belongs to the ergtoxin family. Gamma-KTx 4 subfamily. As to expression, expressed by the venom gland.

It is found in the secreted. In terms of biological role, reversibly blocks Kv11/ERG potassium channels. The protein is Potassium channel toxin gamma-KTx 4.13 of Centruroides noxius (Mexican scorpion).